We begin with the raw amino-acid sequence, 686 residues long: Zinc finger protein 7 (686 aa).

In terms of domain architecture, KRAB spans 4–76; that stretch reads VTFGDVAVHF…DLQGAEGTEA (73 aa). Glycyl lysine isopeptide (Lys-Gly) (interchain with G-Cter in SUMO2) cross-links involve residues lysine 81 and lysine 101. Phosphoserine is present on residues serine 126 and serine 138. C2H2-type zinc fingers lie at residues 223-245, 250-272, 278-300, 306-328, 334-356, and 362-384; these read SRCQECQKKLSDCLQGKHTNNCH, YECAECGKVFRLCSQLNQHQRIH, FKCTECGKAFRLSSKLIQHQRIH, YRCEECGKAFGQSSSLIHHQRIH, YGCRECGKAFSQQSQLVRHQRTH, and YPCKECGKAFSQSSTLAQHQRMH. Residues lysine 279 and lysine 292 each participate in a glycyl lysine isopeptide (Lys-Gly) (interchain with G-Cter in SUMO2) cross-link. A Glycyl lysine isopeptide (Lys-Gly) (interchain with G-Cter in SUMO2) cross-link involves residue lysine 393. 9 C2H2-type zinc fingers span residues 413 to 435, 441 to 463, 469 to 491, 497 to 519, 525 to 547, 553 to 575, 581 to 603, 634 to 656, and 662 to 684; these read FKCDECGKAFRWISRLSQHQLIH, YKCNKCTKAFGCSSRLIRHQRTH, FKCDECGKGFVQGSHLIQHQRIH, YVCNDCGKAFSQSSSLIYHQRIH, YECLQCGKAFSMSTQLTIHQRVH, YKCNECGKAFSQNSTLFQHQIIH, YECSECGKAFSRSSYLIEHQRIH, HQCEDCEKIFRWRSHLIIHQRIH, and YKCNDCGKAFNRSSRLTQHQKIH.

This sequence belongs to the krueppel C2H2-type zinc-finger protein family.

Its subcellular location is the nucleus. In terms of biological role, may be involved in transcriptional regulation. The sequence is that of Zinc finger protein 7 (ZNF7) from Pongo abelii (Sumatran orangutan).